The chain runs to 180 residues: MTIQVQNLNCCPGRFVCVHKMTLLIILIISAAVTVIDQLYQKLPYDEQTKYIVSTITDGINATIISVMAILGLNNLNRVRYSKLDENGVYSQEMVTMNVQSDAANNKKQLKKKENEDVDEEKGLYPNLKLTEPTAPMIHNYMYDHKTQQAYLLTEHQIEQIKQNSVDPNNTPKIEVRSQF.

The next 2 helical transmembrane spans lie at 16–36 and 52–72; these read VCVH…VTVI and IVST…AILG.

It localises to the host membrane. In Banna virus (BAV), this protein is Non-structural protein 4 (Segment-11).